The sequence spans 255 residues: U2 small nuclear ribonucleoprotein A' (255 aa).

LRR repeat units lie at residues arginine 20–leucine 41, glutamine 43–arginine 64, arginine 65–alanine 86, and cysteine 89–alanine 110. The 39-residue stretch at asparagine 123–methionine 161 folds into the LRRCT domain. Lysine 172 bears the N6-acetyllysine; alternate mark. Lysine 172 participates in a covalent cross-link: Glycyl lysine isopeptide (Lys-Gly) (interchain with G-Cter in SUMO2); alternate. A phosphoserine mark is found at serine 178 and serine 197. Positions lysine 179–glycine 199 are disordered. Residue lysine 221 forms a Glycyl lysine isopeptide (Lys-Gly) (interchain with G-Cter in SUMO2) linkage. Residues glycine 222–serine 255 are disordered. Phosphoserine is present on residues serine 236 and serine 255. Positions aspartate 240 to serine 255 are enriched in acidic residues.

It belongs to the U2 small nuclear ribonucleoprotein A family. As to quaternary structure, identified in the spliceosome B complex. Identified in the spliceosome C complex. Found in a pre-mRNA splicing complex with SFRS4, SFRS5, SNRNP70, SNRPA1, SRRM1 and SRRM2. Found in a pre-mRNA exonic splicing enhancer (ESE) complex with SNRNP70, SNRPA1, SRRM1 and TRA2B. Contributes to the binding of stem loop IV of U2 snRNA with SNRPB2.

Its subcellular location is the nucleus. Functionally, involved in pre-mRNA splicing as component of the spliceosome. Associated with sn-RNP U2, where it contributes to the binding of stem loop IV of U2 snRNA. This is U2 small nuclear ribonucleoprotein A' (Snrpa1) from Mus musculus (Mouse).